The following is an 85-amino-acid chain: Kappa-theraphotoxin-Cg1d (85 aa).

The first 21 residues, 1–21 (MKVSVLITLAVLGVMFVWASA), serve as a signal peptide directing secretion. Residues 22–51 (AELEERGSDQRDSPAWLKSMERIFQSEERE) constitute a propeptide that is removed on maturation. Disulfide bonds link cysteine 52–cysteine 66, cysteine 59–cysteine 71, and cysteine 65–cysteine 78.

The protein belongs to the neurotoxin 10 (Hwtx-1) family. 28 (Jztx-11) subfamily. As to expression, expressed by the venom gland.

It is found in the secreted. Functionally, probable ion channel inhibitor. The protein is Kappa-theraphotoxin-Cg1d of Chilobrachys guangxiensis (Chinese earth tiger tarantula).